We begin with the raw amino-acid sequence, 248 residues long: Glucosamine-6-phosphate isomerase (248 aa).

Asp-68 serves as the catalytic Proton acceptor; for enolization step. The active-site For ring-opening step is Glu-137. Residue His-139 is the Proton acceptor; for ring-opening step of the active site. Glu-144 acts as the For ring-opening step in catalysis.

Belongs to the glucosamine/galactosamine-6-phosphate isomerase family. In terms of assembly, monomer.

It carries out the reaction alpha-D-glucosamine 6-phosphate + H2O = beta-D-fructose 6-phosphate + NH4(+). In Candida albicans (strain SC5314 / ATCC MYA-2876) (Yeast), this protein is Glucosamine-6-phosphate isomerase (NAG1).